A 394-amino-acid chain; its full sequence is Elongation factor Tu (394 aa).

Residues 10–204 (KPHVNIGTIG…AVDSWIPLPE (195 aa)) enclose the tr-type G domain. The interval 19-26 (GHVDHGKT) is G1. 19 to 26 (GHVDHGKT) lines the GTP pocket. Position 26 (T26) interacts with Mg(2+). The interval 60 to 64 (GITIN) is G2. Positions 81-84 (DCPG) are G3. GTP contacts are provided by residues 81-85 (DCPGH) and 136-139 (NKCD). Residues 136–139 (NKCD) form a G4 region. A G5 region spans residues 174–176 (SGL).

This sequence belongs to the TRAFAC class translation factor GTPase superfamily. Classic translation factor GTPase family. EF-Tu/EF-1A subfamily. In terms of assembly, monomer.

It localises to the cytoplasm. The enzyme catalyses GTP + H2O = GDP + phosphate + H(+). Its function is as follows. GTP hydrolase that promotes the GTP-dependent binding of aminoacyl-tRNA to the A-site of ribosomes during protein biosynthesis. The polypeptide is Elongation factor Tu (Ureaplasma urealyticum serovar 10 (strain ATCC 33699 / Western)).